Reading from the N-terminus, the 200-residue chain is MARYTGSVWKKSRRLGISLTGTGKELDKRPYAPGQHGPNQRRKLSEYGLQMQEKQKLRFMYGLNERQFRTLFDKAGKMKGIHGENFMILLESRLDNLVYRLGLARTRRQARQLVNHGHVTVDGGRVDIPSYAIKPGQVIGLREKSKNLDVVKEALEANSFVPEYTSFDADKMEGSYTRFPERSELPAEINEQLIVEFYSR.

Positions 20–41 (TGTGKELDKRPYAPGQHGPNQR) are disordered. Positions 92–152 (SRLDNLVYRL…EKSKNLDVVK (61 aa)) constitute an S4 RNA-binding domain.

Belongs to the universal ribosomal protein uS4 family. Part of the 30S ribosomal subunit. Contacts protein S5. The interaction surface between S4 and S5 is involved in control of translational fidelity.

One of the primary rRNA binding proteins, it binds directly to 16S rRNA where it nucleates assembly of the body of the 30S subunit. Functionally, with S5 and S12 plays an important role in translational accuracy. This Oceanobacillus iheyensis (strain DSM 14371 / CIP 107618 / JCM 11309 / KCTC 3954 / HTE831) protein is Small ribosomal subunit protein uS4.